Reading from the N-terminus, the 236-residue chain is Small ribosomal subunit protein uS2c (236 aa).

Belongs to the universal ribosomal protein uS2 family.

It localises to the plastid. It is found in the chloroplast. In Phalaenopsis aphrodite subsp. formosana (Moth orchid), this protein is Small ribosomal subunit protein uS2c (rps2).